A 201-amino-acid polypeptide reads, in one-letter code: dTTP/UTP pyrophosphatase (201 aa).

Residue Asp-81 is the Proton acceptor of the active site.

This sequence belongs to the Maf family. YhdE subfamily. A divalent metal cation is required as a cofactor.

The protein localises to the cytoplasm. The enzyme catalyses dTTP + H2O = dTMP + diphosphate + H(+). It catalyses the reaction UTP + H2O = UMP + diphosphate + H(+). In terms of biological role, nucleoside triphosphate pyrophosphatase that hydrolyzes dTTP and UTP. May have a dual role in cell division arrest and in preventing the incorporation of modified nucleotides into cellular nucleic acids. The sequence is that of dTTP/UTP pyrophosphatase from Dechloromonas aromatica (strain RCB).